The chain runs to 364 residues: Lytic cellulose monooxygenase (364 aa).

The N-terminal stretch at 1 to 34 is a signal peptide; it reads MARRSRYISLAAVMATLLSALGVTFLLGQGRAEA. Cu cation-binding residues include histidine 35 and histidine 144. Positions 35-225 constitute a Chitin-binding type-4 domain; the sequence is HGVAMMPGSR…QENFFSCSDV (191 aa). Residues 234–261 form a disordered region; it reads VTGIRGSGGTPTPTPTPTTPPTTPPPTH. The span at 245–260 shows a compositional bias: pro residues; the sequence is TPTPTPTTPPTTPPPT. Residues 258–364 form the CBM2 domain; sequence PPTHSGSCMA…PVGTIGCVAP (107 aa).

Cu(2+) is required as a cofactor.

The protein resides in the secreted. The enzyme catalyses [(1-&gt;4)-beta-D-glucosyl]n+m + reduced acceptor + O2 = [(1-&gt;4)-beta-D-glucosyl]m-1-(1-&gt;4)-D-glucono-1,5-lactone + [(1-&gt;4)-beta-D-glucosyl]n + acceptor + H2O.. It functions in the pathway glycan metabolism; cellulose degradation. In terms of biological role, involved in the degradation of lignocellulosic biomass. Catalyzes the oxidative cleavage of glycosidic bonds in cellulosic substrates via a copper-dependent mechanism. Degrades phosphoric acid swollen cellulose (PASC) to oxidized cellooligosaccharides with degrees of polymerization of 4-8. Also shows activity on agricultural fiber paper pulps such as flax pulp. Is not active on chitin. The sequence is that of Lytic cellulose monooxygenase from Streptomyces ambofaciens (strain ATCC 23877 / 3486 / DSM 40053 / JCM 4204 / NBRC 12836 / NRRL B-2516).